The primary structure comprises 435 residues: 5-methylthioadenosine/S-adenosylhomocysteine deaminase (435 aa).

2 residues coordinate Zn(2+): histidine 65 and histidine 67. Substrate-binding residues include glutamate 94, arginine 150, and histidine 189. A Zn(2+)-binding site is contributed by histidine 216. Substrate is bound by residues glutamate 219 and aspartate 304. Position 304 (aspartate 304) interacts with Zn(2+).

Belongs to the metallo-dependent hydrolases superfamily. MTA/SAH deaminase family. It depends on Zn(2+) as a cofactor.

It catalyses the reaction S-adenosyl-L-homocysteine + H2O + H(+) = S-inosyl-L-homocysteine + NH4(+). The catalysed reaction is S-methyl-5'-thioadenosine + H2O + H(+) = S-methyl-5'-thioinosine + NH4(+). Catalyzes the deamination of 5-methylthioadenosine and S-adenosyl-L-homocysteine into 5-methylthioinosine and S-inosyl-L-homocysteine, respectively. Is also able to deaminate adenosine. The chain is 5-methylthioadenosine/S-adenosylhomocysteine deaminase from Bacillus anthracis (strain A0248).